A 264-amino-acid polypeptide reads, in one-letter code: Proliferating cell nuclear antigen (264 aa).

Residues 61–80 (RCDRNTSMGMNLGNMSKMLK) mediate DNA binding.

It belongs to the PCNA family.

It localises to the nucleus. Functionally, this protein is an auxiliary protein of DNA polymerase delta and is involved in the control of eukaryotic DNA replication by increasing the polymerase's processibility during elongation of the leading strand. The protein is Proliferating cell nuclear antigen (PCNA) of Populus nigra (Lombardy poplar).